We begin with the raw amino-acid sequence, 719 residues long: Translation initiation factor IF-2 (719 aa).

A compositionally biased stretch (basic and acidic residues) spans Asn-54 to Pro-67. Disordered regions lie at residues Asn-54–Asn-75 and Ser-97–Asn-122. Over residues Lys-109 to Asn-122 the composition is skewed to basic residues. The tr-type G domain maps to His-221 to Lys-390. A G1 region spans residues Gly-230 to Thr-237. Gly-230–Thr-237 contributes to the GTP binding site. The interval Gly-255–His-259 is G2. The G3 stretch occupies residues Asp-276–Gly-279. GTP contacts are provided by residues Asp-276 to His-280 and Asn-330 to Asp-333. The G4 stretch occupies residues Asn-330 to Asp-333. The interval Ser-366 to Arg-368 is G5.

It belongs to the TRAFAC class translation factor GTPase superfamily. Classic translation factor GTPase family. IF-2 subfamily.

It is found in the cytoplasm. Its function is as follows. One of the essential components for the initiation of protein synthesis. Protects formylmethionyl-tRNA from spontaneous hydrolysis and promotes its binding to the 30S ribosomal subunits. Also involved in the hydrolysis of GTP during the formation of the 70S ribosomal complex. This Alkaliphilus oremlandii (strain OhILAs) (Clostridium oremlandii (strain OhILAs)) protein is Translation initiation factor IF-2.